The sequence spans 441 residues: Histidinol dehydrogenase (441 aa).

The substrate site is built by threonine 240, glutamine 262, and histidine 265. Glutamine 262 and histidine 265 together coordinate Zn(2+). Residues glutamate 332 and histidine 333 each act as proton acceptor in the active site. Histidine 333, aspartate 366, glutamate 420, and histidine 425 together coordinate substrate. Position 366 (aspartate 366) interacts with Zn(2+). Histidine 425 is a Zn(2+) binding site.

The protein belongs to the histidinol dehydrogenase family. Zn(2+) is required as a cofactor.

It catalyses the reaction L-histidinol + 2 NAD(+) + H2O = L-histidine + 2 NADH + 3 H(+). Its pathway is amino-acid biosynthesis; L-histidine biosynthesis; L-histidine from 5-phospho-alpha-D-ribose 1-diphosphate: step 9/9. Its function is as follows. Catalyzes the sequential NAD-dependent oxidations of L-histidinol to L-histidinaldehyde and then to L-histidine. This is Histidinol dehydrogenase from Streptomyces avermitilis (strain ATCC 31267 / DSM 46492 / JCM 5070 / NBRC 14893 / NCIMB 12804 / NRRL 8165 / MA-4680).